Reading from the N-terminus, the 347-residue chain is Ribosomal RNA small subunit methyltransferase H (347 aa).

Residues 47–49 (GGY), aspartate 64, phenylalanine 91, aspartate 114, and glutamine 121 each bind S-adenosyl-L-methionine. Residues 291-347 (PAVKGAVGPTAEEEERNPRARSAKLRAGIRTENPPLEDDLSLFGLPKLPETNELARS) are disordered.

The protein belongs to the methyltransferase superfamily. RsmH family.

The protein localises to the cytoplasm. The enzyme catalyses cytidine(1402) in 16S rRNA + S-adenosyl-L-methionine = N(4)-methylcytidine(1402) in 16S rRNA + S-adenosyl-L-homocysteine + H(+). Functionally, specifically methylates the N4 position of cytidine in position 1402 (C1402) of 16S rRNA. This Brucella anthropi (strain ATCC 49188 / DSM 6882 / CCUG 24695 / JCM 21032 / LMG 3331 / NBRC 15819 / NCTC 12168 / Alc 37) (Ochrobactrum anthropi) protein is Ribosomal RNA small subunit methyltransferase H.